A 305-amino-acid chain; its full sequence is Homoserine O-acetyltransferase (305 aa).

Catalysis depends on cysteine 142, which acts as the Acyl-thioester intermediate. Lysine 163 and serine 192 together coordinate substrate. Histidine 235 serves as the catalytic Proton acceptor. The active site involves glutamate 237. Arginine 249 lines the substrate pocket.

Belongs to the MetA family.

It is found in the cytoplasm. It catalyses the reaction L-homoserine + acetyl-CoA = O-acetyl-L-homoserine + CoA. The protein operates within amino-acid biosynthesis; L-methionine biosynthesis via de novo pathway; O-acetyl-L-homoserine from L-homoserine: step 1/1. In terms of biological role, transfers an acetyl group from acetyl-CoA to L-homoserine, forming acetyl-L-homoserine. The chain is Homoserine O-acetyltransferase from Phocaeicola vulgatus (strain ATCC 8482 / DSM 1447 / JCM 5826 / CCUG 4940 / NBRC 14291 / NCTC 11154) (Bacteroides vulgatus).